A 435-amino-acid polypeptide reads, in one-letter code: Trigger factor (435 aa).

The interval 125–147 (MEVPEQDTSVSDADVDSELENKR) is disordered. The 86-residue stretch at 164-249 (GDTVVIDYEG…IHEVKEKQLP (86 aa)) folds into the PPIase FKBP-type domain.

It belongs to the FKBP-type PPIase family. Tig subfamily.

The protein resides in the cytoplasm. It catalyses the reaction [protein]-peptidylproline (omega=180) = [protein]-peptidylproline (omega=0). Involved in protein export. Acts as a chaperone by maintaining the newly synthesized protein in an open conformation. Functions as a peptidyl-prolyl cis-trans isomerase. The chain is Trigger factor from Limosilactobacillus fermentum (strain NBRC 3956 / LMG 18251) (Lactobacillus fermentum).